Here is a 385-residue protein sequence, read N- to C-terminus: Phosphate acyltransferase (385 aa).

Residues 1-17 (MAAGTSIGTTPGGSTSP) are compositionally biased toward low complexity. The disordered stretch occupies residues 1–28 (MAAGTSIGTTPGGSTSPETPPEHGLTGT).

It belongs to the PlsX family. In terms of assembly, homodimer. Probably interacts with PlsY.

The protein localises to the cytoplasm. The enzyme catalyses a fatty acyl-[ACP] + phosphate = an acyl phosphate + holo-[ACP]. The protein operates within lipid metabolism; phospholipid metabolism. Functionally, catalyzes the reversible formation of acyl-phosphate (acyl-PO(4)) from acyl-[acyl-carrier-protein] (acyl-ACP). This enzyme utilizes acyl-ACP as fatty acyl donor, but not acyl-CoA. The sequence is that of Phosphate acyltransferase from Dinoroseobacter shibae (strain DSM 16493 / NCIMB 14021 / DFL 12).